The primary structure comprises 122 residues: Large ribosomal subunit protein uL14 (122 aa).

This sequence belongs to the universal ribosomal protein uL14 family. As to quaternary structure, part of the 50S ribosomal subunit. Forms a cluster with proteins L3 and L19. In the 70S ribosome, L14 and L19 interact and together make contacts with the 16S rRNA in bridges B5 and B8.

Binds to 23S rRNA. Forms part of two intersubunit bridges in the 70S ribosome. The chain is Large ribosomal subunit protein uL14 from Limosilactobacillus reuteri (strain DSM 20016) (Lactobacillus reuteri).